A 201-amino-acid chain; its full sequence is UPF0301 protein Smed_0532 (201 aa).

Belongs to the UPF0301 (AlgH) family.

The protein is UPF0301 protein Smed_0532 of Sinorhizobium medicae (strain WSM419) (Ensifer medicae).